The chain runs to 286 residues: Undecaprenyl-diphosphatase (286 aa).

The next 8 membrane-spanning stretches (helical) occupy residues 17-37, 49-69, 98-118, 126-146, 159-179, 204-224, 232-252, and 261-281; these read VVLG…TAHL, PGVA…IGYF, IAIA…KLFW, LRSV…LALA, VQGL…IPGV, FLLG…GAFA, LPML…IAWL, and TWPF…LVLA.

Belongs to the UppP family.

It is found in the cell inner membrane. It carries out the reaction di-trans,octa-cis-undecaprenyl diphosphate + H2O = di-trans,octa-cis-undecaprenyl phosphate + phosphate + H(+). Catalyzes the dephosphorylation of undecaprenyl diphosphate (UPP). Confers resistance to bacitracin. The polypeptide is Undecaprenyl-diphosphatase (Synechococcus sp. (strain RCC307)).